The chain runs to 307 residues: Nodulation protein NoeC (307 aa).

The next 8 membrane-spanning stretches (helical) occupy residues 46-66 (APLW…YVLN), 91-111 (SGLT…VCAI), 117-137 (LFAI…KVRG), 140-160 (VLDL…GATA), 163-183 (IPVP…LASI), 212-232 (IVAL…ELFV), 238-258 (AQGP…AYWI), and 279-299 (VTDG…VFLM).

The protein localises to the cell membrane. The polypeptide is Nodulation protein NoeC (noeC) (Azorhizobium caulinodans (strain ATCC 43989 / DSM 5975 / JCM 20966 / LMG 6465 / NBRC 14845 / NCIMB 13405 / ORS 571)).